Consider the following 1113-residue polypeptide: Sterol regulatory element binding protein sbp-1 (1113 aa).

The transcriptional activation (acidic) stretch occupies residues 1-52 (MNEEFEGDVPMSDPFLSLVTKLDDIAPFPNNDPLDFDMEHNWQEPGPSQQPD). Disordered stretches follow at residues 24–68 (DIAP…EYYD), 101–132 (LGGG…TSPP), 206–274 (SPYD…SPQN), and 290–345 (EVER…SQGT). The segment covering 229–238 (PHHHHHHPMP) has biased composition (basic residues). Residues 324–337 (AEGDEDEDDEDSDS) are compositionally biased toward acidic residues. Residues 355 to 368 (ERRTAHNLIEKKYR) form a basic motif region. The bHLH domain maps to 355-405 (ERRTAHNLIEKKYRCSINDRIQQLKVLLCGDEAKLSKSATLRRAIEHIEEV). The helix-loop-helix motif stretch occupies residues 369 to 405 (CSINDRIQQLKVLLCGDEAKLSKSATLRRAIEHIEEV). A coiled-coil region spans residues 395-422 (LRRAIEHIEEVEHENQVLKHHVEQMRKT). The tract at residues 437–472 (TEYSARSPVESSPSPPRNERKRSRMSTTTPMKNGTR) is disordered. 2 consecutive transmembrane segments (helical) span residues 478–498 (VTLF…LLAG) and 541–561 (MSYV…KLLI).

Post-translationally, processed in the Golgi apparatus, releasing the protein from the membrane. Ubiquitinated; the nuclear form has a rapid turnover and is rapidly ubiquitinated and degraded by the proteasome in the nucleus. In terms of tissue distribution, broadly expressed, including many cells in the head. Expressed in the intestine.

It is found in the nucleus. The protein localises to the endoplasmic reticulum membrane. In terms of biological role, transcription factor involved in maintaining normal fat levels. Regulates the expression of genes involved in lipid metabolism in response to nutrient availability, such as the fatty-acid desaturases fat-5, fat-6 and fat-7. In response to a high-glucose diet, promotes fatty acid synthesis, elongation and desaturation, acting in concert with transcription factor mxl-3. Plays a role in synthesis of monomethyl branched-chain fatty acids (mmBCFAs) as well as other very-long-chain fatty acids. Downstream of the cis-Golgi membrane protein eas-1/GOLT1B and the E3 ubiquitin ligase rnf-145/RNF145, plays a role in the regulation of glial size, perhaps by modulating synthesis of long-chain polyunsaturated fatty-acids (LC-PUFA). Modulates expression of genes in the one-carbon cycle, which produces the methyl donor S-adenosylmethionine (SAM). Probably involved in a feedback loop in which decreased levels of SAM lead to increased transcriptional activity of sbp-1, thereby causing lipid accumulation. Involved in the negative regulation of zinc homeostasis. Involved in the response to simulated microgravity, in concert with Mediator complex subunit mdt-15, probably acting in the intestine. Plays a role in transgenerational lipid accumulation in response to a high-fat diet, probably acting by upregulating wdr-5.1 expression to increase the level of trimethylated 'Lys-4' histone H3 (H3K4me3), which may then induce the expression of fat-5, fat-6 and fat-7. May act as an oxygen sensor for lipid metabolism. Precursor of the transcription factor form, which is embedded in the endoplasmic reticulum membrane. Processing of this form allows release of the transcription factor form that translocates into the nucleus and activates transcription of genes involved in sterol biosynthesis and lipid homeostasis. Its function is as follows. Key transcription factor that regulates expression of genes involved in sterol biosynthesis and lipid homeostasis. This Caenorhabditis elegans protein is Sterol regulatory element binding protein sbp-1.